The sequence spans 209 residues: tRNA (guanine-N(7)-)-methyltransferase (209 aa).

The S-adenosyl-L-methionine site is built by Asp-35, Glu-60, Asn-87, and Asp-113. Asp-113 is a catalytic residue. Lys-117 and Asp-149 together coordinate substrate.

This sequence belongs to the class I-like SAM-binding methyltransferase superfamily. TrmB family.

The enzyme catalyses guanosine(46) in tRNA + S-adenosyl-L-methionine = N(7)-methylguanosine(46) in tRNA + S-adenosyl-L-homocysteine. It functions in the pathway tRNA modification; N(7)-methylguanine-tRNA biosynthesis. In terms of biological role, catalyzes the formation of N(7)-methylguanine at position 46 (m7G46) in tRNA. The sequence is that of tRNA (guanine-N(7)-)-methyltransferase from Prochlorococcus marinus (strain MIT 9515).